Here is a 342-residue protein sequence, read N- to C-terminus: Alpha-(1,3)-fucosyltransferase 7 (342 aa).

The Cytoplasmic segment spans residues 1-11 (MQNAGLSPTPS). Residues 12-31 (LRALGGLAMAALLSTVWLWW) traverse the membrane as a helical; Signal-anchor for type II membrane protein segment. Residues 32–342 (RLGAAPGGAP…YQDLEGWFQA (311 aa)) lie on the Extracellular side of the membrane. Cys-68 and Cys-76 are joined by a disulfide. N-linked (GlcNAc...) asparagine glycosylation is present at Asn-81. A disulfide bond links Cys-211 and Cys-214. Asn-291 carries N-linked (GlcNAc...) asparagine glycosylation. Cys-318 and Cys-321 are joined by a disulfide.

The protein belongs to the glycosyltransferase 10 family. N-glycosylated. Expressed in thymus, spleen, liver and lung. Highly expressed in the thymus and lower expressed in the lung.

It localises to the membrane. It catalyses the reaction an N-acetyl-alpha-neuraminyl-(2-&gt;3)-beta-D-galactosyl-(1-&gt;4)-N-acetyl-beta-D-glucosaminyl derivative + GDP-beta-L-fucose = an alpha-Neu5Ac-(2-&gt;3)-beta-D-Gal-(1-&gt;4)-[alpha-L-Fuc-(1-&gt;3)]-beta-D-GlcNAc derivative + GDP + H(+). The enzyme catalyses a neolactoside IV(3)-alpha-NeuAc-nLc4Cer + GDP-beta-L-fucose = a neolactoside IV(3)-alpha-NeuNAc,III(3)-alpha-Fuc-nLc4Cer + GDP + H(+). It carries out the reaction a neolactoside VI(3)-alpha-NeuNAc-nLc6Cer + GDP-beta-L-fucose = a neolactoside VI(3)-alpha-NeuAc,V(3)-alphaFuc-nLc6Cer + GDP + H(+). The catalysed reaction is an alpha-Neu5Ac-(2-&gt;3)-beta-D-Gal-(1-&gt;4)-beta-D-GlcNAc-(1-&gt;3)-beta-D-Gal-(1-&gt;4)-[alpha-L-Fuc-(1-&gt;3)]-beta-D-GlcNAc derivative + GDP-beta-L-fucose = an alpha-Neu5Ac-(2-&gt;3)-beta-D-Gal-(1-&gt;4)-[alpha-L-Fuc-(1-&gt;3)]-beta-D-GlcNAc-(1-&gt;3)-beta-D-Gal-(1-&gt;4)-[alpha-L-Fuc-(1-&gt;3)]-beta-D-GlcNAc derivative + GDP + H(+). It catalyses the reaction an alpha-Neu5Ac-(2-&gt;3)-beta-D-Gal-(1-&gt;4)-beta-D-GlcNAc6S derivative + GDP-beta-L-fucose = an alpha-Neu5Ac-(2-&gt;3)-beta-D-Gal-(1-&gt;4)-[alpha-L-Fuc-(1-&gt;3)]-beta-D-GlcNAc6S derivative + GDP + H(+). The enzyme catalyses alpha-Neu5Ac-(2-&gt;3)-beta-D-Gal-(1-&gt;4)-beta-D-GlcNAc-(1-&gt;3)-beta-D-Gal-(1-&gt;4)-D-Glc + GDP-beta-L-fucose = alpha-Neu5Ac-(2-&gt;3)-beta-D-Gal-(1-&gt;4)-[alpha-L-Fuc-(1-&gt;3)]-beta-D-GlcNAc-(1-&gt;3)-beta-D-Gal-(1-&gt;4)-D-Glc + GDP + H(+). It carries out the reaction alpha-Neu5Ac-(2-&gt;3)-beta-D-Gal-(1-&gt;4)-beta-D-GlcNAc-(1-&gt;3)-beta-D-Gal-(1-&gt;4)-[alpha-L-Fuc-(1-&gt;3)]-beta-D-GlcNAc-(1-&gt;3)-beta-D-Gal-(1-&gt;4)-beta-D-GlcNAc + GDP-beta-L-fucose = alpha-Neu5Ac-(2-&gt;3)-beta-D-Gal-(1-&gt;4)-[alpha-L-Fuc-(1-&gt;3)]-beta-D-GlcNAc-(1-&gt;3)-beta-D-Gal-(1-&gt;4)-[alpha-L-Fuc-(1-&gt;3)]-beta-D-GlcNAc-(1-&gt;3)-beta-D-Gal-(1-&gt;4)-beta-D-GlcNAc + GDP + H(+). The catalysed reaction is alpha-Neu5Ac-(2-&gt;3)-beta-D-Gal-(1-&gt;4)-beta-D-GlcNAc-(1-&gt;3)-beta-D-Gal-(1-&gt;4)-beta-D-GlcNAc-(1-&gt;3)-beta-D-Gal-(1-&gt;4)-beta-D-GlcNAc + GDP-beta-L-fucose = alpha-Neu5Ac-(2-&gt;3)-beta-D-Gal-(1-&gt;4)-[alpha-L-Fuc-(1-&gt;3)]-beta-D-GlcNAc-(1-&gt;3)-beta-D-Gal-(1-&gt;4)-beta-D-GlcNAc-(1-&gt;3)-beta-D-Gal-(1-&gt;4)-beta-D-GlcNAc + GDP + H(+). The protein operates within protein modification; protein glycosylation. Inhibited by NaCl. Inhibited by GDP in a concentration dependent manner, with an IC(50) value of 93 uM. Also inhibited by GMP and GTP. Inhibited by N-ethylmaleimide. Activated by poly(ethylene glycol) by enhancing the thermal stability of FUT7. Activated by Mn2+, Ca2+, and Mg2+. Both panosialin A and B inhibit activity with IC(50) values of 4.8 and 5.3 ug/ml, respectively. Inhibited by gallic acid (GA) and (-)-epigallocatechin gallate (EGCG) in a time-dependent and irreversible manner with IC(50) values of 60 and 700 nM, respectively. Catalyzes the transfer of L-fucose, from a guanosine diphosphate-beta-L-fucose, to the N-acetyl glucosamine (GlcNAc) of a distal alpha2,3 sialylated lactosamine unit of a glycoprotein or a glycolipid-linked sialopolylactosamines chain through an alpha-1,3 glycosidic linkage and participates in the final fucosylation step in the biosynthesis of the sialyl Lewis X (sLe(x)), a carbohydrate involved in cell and matrix adhesion during leukocyte trafficking and fertilization. In vitro, also synthesizes sialyl-dimeric-Lex structures, from VIM-2 structures and both di-fucosylated and trifucosylated structures from mono-fucosylated precursors. However does not catalyze alpha 1-3 fucosylation when an internal alpha 1-3 fucosylation is present in polylactosamine chain and the fucosylation rate of the internal GlcNAc residues is reduced once fucose has been added to the distal GlcNAc. Also catalyzes the transfer of a fucose from GDP-beta-fucose to the 6-sulfated a(2,3)sialylated substrate to produce 6-sulfo sLex mediating significant L-selectin-dependent cell adhesion. Through sialyl-Lewis(x) biosynthesis, can control SELE- and SELP-mediated cell adhesion with leukocytes and allows leukocytes tethering and rolling along the endothelial tissue thereby enabling the leukocytes to accumulate at a site of inflammation. May enhance embryo implantation through sialyl Lewis X (sLeX)-mediated adhesion of embryo cells to endometrium. May affect insulin signaling by up-regulating the phosphorylation and expression of some signaling molecules involved in the insulin-signaling pathway through SLe(x) which is present on the glycans of the INSRR alpha subunit. The chain is Alpha-(1,3)-fucosyltransferase 7 from Bos taurus (Bovine).